A 275-amino-acid chain; its full sequence is Mitochondrial fission factor homolog A (275 aa).

At 1–255 (MAEVNRIHYE…ENKERAKREM (255 aa)) the chain is on the cytoplasmic side. The tract at residues 100 to 171 (DFLEPEPAAN…PLISPEDSQN (72 aa)) is disordered. Positions 114–130 (PREEMKSHFRSRREQCR) are enriched in basic and acidic residues. The segment covering 131–142 (SENSTMRRNGQI) has biased composition (polar residues). The stretch at 223–253 (LTDAASLRRQIIKLNRRLQLLEHENKERAKR) forms a coiled coil. A helical; Anchor for type IV membrane protein transmembrane segment spans residues 256 to 273 (VMYSLTVAFWLVNSWIWL). Residues 274–275 (RR) lie on the Extracellular side of the membrane.

This sequence belongs to the Tango11 family.

It localises to the mitochondrion outer membrane. It is found in the peroxisome. Plays a role in mitochondrial and peroxisomal fission. Promotes the recruitment and association of the fission mediator dynamin-related protein 1 (DNM1L) to the mitochondrial surface. This chain is Mitochondrial fission factor homolog A, found in Danio rerio (Zebrafish).